The chain runs to 172 residues: Xanthine-guanine phosphoribosyltransferase (172 aa).

5-phospho-alpha-D-ribose 1-diphosphate is bound by residues 47–48 (RG) and 106–114 (DDLVDTGKT). A Mg(2+)-binding site is contributed by aspartate 107. Residues aspartate 110 and isoleucine 153 each coordinate guanine. Xanthine-binding residues include aspartate 110 and isoleucine 153. Residues 110-114 (DTGKT) and 152-153 (WI) each bind GMP.

It belongs to the purine/pyrimidine phosphoribosyltransferase family. XGPT subfamily. As to quaternary structure, homotetramer. It depends on Mg(2+) as a cofactor.

Its subcellular location is the cell inner membrane. The catalysed reaction is GMP + diphosphate = guanine + 5-phospho-alpha-D-ribose 1-diphosphate. It catalyses the reaction XMP + diphosphate = xanthine + 5-phospho-alpha-D-ribose 1-diphosphate. The enzyme catalyses IMP + diphosphate = hypoxanthine + 5-phospho-alpha-D-ribose 1-diphosphate. Its pathway is purine metabolism; GMP biosynthesis via salvage pathway; GMP from guanine: step 1/1. It participates in purine metabolism; XMP biosynthesis via salvage pathway; XMP from xanthine: step 1/1. Functionally, purine salvage pathway enzyme that catalyzes the transfer of the ribosyl-5-phosphate group from 5-phospho-alpha-D-ribose 1-diphosphate (PRPP) to the N9 position of the 6-oxopurines guanine and xanthine to form the corresponding ribonucleotides GMP (guanosine 5'-monophosphate) and XMP (xanthosine 5'-monophosphate), with the release of PPi. To a lesser extent, also acts on hypoxanthine. In Rhodopseudomonas palustris (strain BisB5), this protein is Xanthine-guanine phosphoribosyltransferase.